The following is a 383-amino-acid chain: Lipid-A-disaccharide synthase (383 aa).

The protein belongs to the LpxB family.

It catalyses the reaction a lipid X + a UDP-2-N,3-O-bis[(3R)-3-hydroxyacyl]-alpha-D-glucosamine = a lipid A disaccharide + UDP + H(+). Its pathway is bacterial outer membrane biogenesis; LPS lipid A biosynthesis. Condensation of UDP-2,3-diacylglucosamine and 2,3-diacylglucosamine-1-phosphate to form lipid A disaccharide, a precursor of lipid A, a phosphorylated glycolipid that anchors the lipopolysaccharide to the outer membrane of the cell. The polypeptide is Lipid-A-disaccharide synthase (Anaeromyxobacter dehalogenans (strain 2CP-1 / ATCC BAA-258)).